Here is a 339-residue protein sequence, read N- to C-terminus: RNA 3'-terminal phosphate cyclase (339 aa).

Residues Gln-101 and 283-286 each bind ATP; that span reads HMSD. The active-site Tele-AMP-histidine intermediate is the His-307.

Belongs to the RNA 3'-terminal cyclase family. Type 1 subfamily.

Its subcellular location is the cytoplasm. It carries out the reaction a 3'-end 3'-phospho-ribonucleotide-RNA + ATP = a 3'-end 2',3'-cyclophospho-ribonucleotide-RNA + AMP + diphosphate. Functionally, catalyzes the conversion of 3'-phosphate to a 2',3'-cyclic phosphodiester at the end of RNA. The mechanism of action of the enzyme occurs in 3 steps: (A) adenylation of the enzyme by ATP; (B) transfer of adenylate to an RNA-N3'P to produce RNA-N3'PP5'A; (C) and attack of the adjacent 2'-hydroxyl on the 3'-phosphorus in the diester linkage to produce the cyclic end product. The biological role of this enzyme is unknown but it is likely to function in some aspects of cellular RNA processing. This Sulfurisphaera tokodaii (strain DSM 16993 / JCM 10545 / NBRC 100140 / 7) (Sulfolobus tokodaii) protein is RNA 3'-terminal phosphate cyclase.